We begin with the raw amino-acid sequence, 458 residues long: ATP synthase subunit beta (458 aa).

Gly148–Thr155 contributes to the ATP binding site.

The protein belongs to the ATPase alpha/beta chains family. In terms of assembly, F-type ATPases have 2 components, CF(1) - the catalytic core - and CF(0) - the membrane proton channel. CF(1) has five subunits: alpha(3), beta(3), gamma(1), delta(1), epsilon(1). CF(0) has three main subunits: a(1), b(2) and c(9-12). The alpha and beta chains form an alternating ring which encloses part of the gamma chain. CF(1) is attached to CF(0) by a central stalk formed by the gamma and epsilon chains, while a peripheral stalk is formed by the delta and b chains.

Its subcellular location is the cell inner membrane. It catalyses the reaction ATP + H2O + 4 H(+)(in) = ADP + phosphate + 5 H(+)(out). Its function is as follows. Produces ATP from ADP in the presence of a proton gradient across the membrane. The catalytic sites are hosted primarily by the beta subunits. In Shewanella pealeana (strain ATCC 700345 / ANG-SQ1), this protein is ATP synthase subunit beta.